Here is a 189-residue protein sequence, read N- to C-terminus: Putative manganese efflux pump MntP (189 aa).

6 helical membrane-spanning segments follow: residues 3 to 23, 41 to 61, 69 to 89, 105 to 125, 133 to 153, and 168 to 188; these read PISL…AALG, LIFG…GQVA, DHWI…YNGI, FWIL…VGVG, IVIA…IGVM, and IVGG…HLSA.

Belongs to the MntP (TC 9.B.29) family.

It localises to the cell inner membrane. Its function is as follows. Probably functions as a manganese efflux pump. This is Putative manganese efflux pump MntP from Pseudomonas savastanoi pv. phaseolicola (strain 1448A / Race 6) (Pseudomonas syringae pv. phaseolicola (strain 1448A / Race 6)).